Reading from the N-terminus, the 191-residue chain is Elongation factor P (191 aa).

Lys34 carries the N6-(3,6-diaminohexanoyl)-5-hydroxylysine modification.

Belongs to the elongation factor P family. Post-translationally, may be beta-lysylated on the epsilon-amino group of Lys-34 by the combined action of EpmA and EpmB, and then hydroxylated on the C5 position of the same residue by EpmC (if this protein is present). Lysylation is critical for the stimulatory effect of EF-P on peptide-bond formation. The lysylation moiety may extend toward the peptidyltransferase center and stabilize the terminal 3-CCA end of the tRNA. Hydroxylation of the C5 position on Lys-34 may allow additional potential stabilizing hydrogen-bond interactions with the P-tRNA.

It is found in the cytoplasm. The protein operates within protein biosynthesis; polypeptide chain elongation. Functionally, involved in peptide bond synthesis. Alleviates ribosome stalling that occurs when 3 or more consecutive Pro residues or the sequence PPG is present in a protein, possibly by augmenting the peptidyl transferase activity of the ribosome. Modification of Lys-34 is required for alleviation. The chain is Elongation factor P from Colwellia psychrerythraea (strain 34H / ATCC BAA-681) (Vibrio psychroerythus).